We begin with the raw amino-acid sequence, 241 residues long: Uridylate kinase (241 aa).

14-17 (KLSG) is a binding site for ATP. The segment at 22-27 (GNQGFG) is involved in allosteric activation by GTP. Gly-56 is a UMP binding site. Positions 57 and 61 each coordinate ATP. Residues Asp-76 and 137 to 144 (TGNPYFTT) each bind UMP. ATP is bound by residues Thr-164, Tyr-170, and Asp-173.

Belongs to the UMP kinase family. Homohexamer.

The protein localises to the cytoplasm. It carries out the reaction UMP + ATP = UDP + ADP. The protein operates within pyrimidine metabolism; CTP biosynthesis via de novo pathway; UDP from UMP (UMPK route): step 1/1. Allosterically activated by GTP. Inhibited by UTP. Functionally, catalyzes the reversible phosphorylation of UMP to UDP. This is Uridylate kinase from Syntrophotalea carbinolica (strain DSM 2380 / NBRC 103641 / GraBd1) (Pelobacter carbinolicus).